Reading from the N-terminus, the 359-residue chain is DNA polymerase IV (359 aa).

The 182-residue stretch at 4–185 folds into the UmuC domain; sequence IIHVDMDCFF…LALIKIPGVG (182 aa). Residues D8 and D103 each contribute to the Mg(2+) site. Residue E104 is part of the active site.

The protein belongs to the DNA polymerase type-Y family. As to quaternary structure, monomer. Mg(2+) is required as a cofactor.

The protein resides in the cytoplasm. The enzyme catalyses DNA(n) + a 2'-deoxyribonucleoside 5'-triphosphate = DNA(n+1) + diphosphate. Functionally, poorly processive, error-prone DNA polymerase involved in untargeted mutagenesis. Copies undamaged DNA at stalled replication forks, which arise in vivo from mismatched or misaligned primer ends. These misaligned primers can be extended by PolIV. Exhibits no 3'-5' exonuclease (proofreading) activity. May be involved in translesional synthesis, in conjunction with the beta clamp from PolIII. The chain is DNA polymerase IV from Shewanella loihica (strain ATCC BAA-1088 / PV-4).